Here is a 222-residue protein sequence, read N- to C-terminus: MLPHGLIVSCQALPDEPLHSSFIMSKMALAAYEGGAVGIRANTKEDILAIKETVDLPVIGIVKRDYDYSDVFITATSKEVDELIESQCEVIALDATLQQRPKETLDELVSYIRTHAPNVEIMADIATVEEAKNAARLGFDYIGTTLHGYTSYTQGQLLYQNDFQFLKDVLQSVDAKVIAEGNVITPDMYKRVMDLGVHCSVVGGAITRPKEITKRFVQVMED.

The protein belongs to the NanE family.

It catalyses the reaction an N-acyl-D-glucosamine 6-phosphate = an N-acyl-D-mannosamine 6-phosphate. It functions in the pathway amino-sugar metabolism; N-acetylneuraminate degradation; D-fructose 6-phosphate from N-acetylneuraminate: step 3/5. Functionally, converts N-acetylmannosamine-6-phosphate (ManNAc-6-P) to N-acetylglucosamine-6-phosphate (GlcNAc-6-P). The chain is Putative N-acetylmannosamine-6-phosphate 2-epimerase from Staphylococcus aureus (strain bovine RF122 / ET3-1).